Consider the following 475-residue polypeptide: Ribulose bisphosphate carboxylase large chain (475 aa).

Residues methionine 1–serine 2 constitute a propeptide that is removed on maturation. Proline 3 is subject to N-acetylproline. Substrate contacts are provided by asparagine 123 and threonine 173. Lysine 175 (proton acceptor) is an active-site residue. Lysine 177 serves as a coordination point for substrate. Lysine 201, aspartate 203, and glutamate 204 together coordinate Mg(2+). Residue lysine 201 is modified to N6-carboxylysine. Histidine 294 acts as the Proton acceptor in catalysis. Substrate-binding residues include arginine 295, histidine 327, and serine 379.

It belongs to the RuBisCO large chain family. Type I subfamily. Heterohexadecamer of 8 large chains and 8 small chains; disulfide-linked. The disulfide link is formed within the large subunit homodimers. It depends on Mg(2+) as a cofactor. The disulfide bond which can form in the large chain dimeric partners within the hexadecamer appears to be associated with oxidative stress and protein turnover.

The protein localises to the plastid. It is found in the chloroplast. It carries out the reaction 2 (2R)-3-phosphoglycerate + 2 H(+) = D-ribulose 1,5-bisphosphate + CO2 + H2O. It catalyses the reaction D-ribulose 1,5-bisphosphate + O2 = 2-phosphoglycolate + (2R)-3-phosphoglycerate + 2 H(+). Functionally, ruBisCO catalyzes two reactions: the carboxylation of D-ribulose 1,5-bisphosphate, the primary event in carbon dioxide fixation, as well as the oxidative fragmentation of the pentose substrate in the photorespiration process. Both reactions occur simultaneously and in competition at the same active site. The sequence is that of Ribulose bisphosphate carboxylase large chain from Welwitschia mirabilis (Tree tumbo).